The chain runs to 267 residues: Phosphate import ATP-binding protein PstB (267 aa).

In terms of domain architecture, ABC transporter spans Val21–Ile262. Gly53–Ser60 contributes to the ATP binding site.

The protein belongs to the ABC transporter superfamily. Phosphate importer (TC 3.A.1.7) family. In terms of assembly, the complex is composed of two ATP-binding proteins (PstB), two transmembrane proteins (PstC and PstA) and a solute-binding protein (PstS).

It localises to the cell inner membrane. It carries out the reaction phosphate(out) + ATP + H2O = ADP + 2 phosphate(in) + H(+). Functionally, part of the ABC transporter complex PstSACB involved in phosphate import. Responsible for energy coupling to the transport system. The polypeptide is Phosphate import ATP-binding protein PstB (Xanthomonas axonopodis pv. citri (strain 306)).